We begin with the raw amino-acid sequence, 347 residues long: Phosphate acyltransferase (347 aa).

The protein belongs to the PlsX family. As to quaternary structure, homodimer. Probably interacts with PlsY.

The protein localises to the cytoplasm. It catalyses the reaction a fatty acyl-[ACP] + phosphate = an acyl phosphate + holo-[ACP]. Its pathway is lipid metabolism; phospholipid metabolism. Catalyzes the reversible formation of acyl-phosphate (acyl-PO(4)) from acyl-[acyl-carrier-protein] (acyl-ACP). This enzyme utilizes acyl-ACP as fatty acyl donor, but not acyl-CoA. This chain is Phosphate acyltransferase, found in Syntrophotalea carbinolica (strain DSM 2380 / NBRC 103641 / GraBd1) (Pelobacter carbinolicus).